The sequence spans 150 residues: MGIKIIANNKKAYHDYFIDEVLEAGMVLLGTEVKSLRLGKANLKDAFCRIMGGELYVNNLHISPYEFGNRENADPTRARKLLVHRAELDKLARKVDEKGLSLVPTKLYFKEGRVKIEIGIARGKKLHDKRQTLKSKEADREMARALRDRH.

The tract at residues 129 to 150 (KRQTLKSKEADREMARALRDRH) is disordered.

Belongs to the SmpB family.

The protein localises to the cytoplasm. Its function is as follows. Required for rescue of stalled ribosomes mediated by trans-translation. Binds to transfer-messenger RNA (tmRNA), required for stable association of tmRNA with ribosomes. tmRNA and SmpB together mimic tRNA shape, replacing the anticodon stem-loop with SmpB. tmRNA is encoded by the ssrA gene; the 2 termini fold to resemble tRNA(Ala) and it encodes a 'tag peptide', a short internal open reading frame. During trans-translation Ala-aminoacylated tmRNA acts like a tRNA, entering the A-site of stalled ribosomes, displacing the stalled mRNA. The ribosome then switches to translate the ORF on the tmRNA; the nascent peptide is terminated with the 'tag peptide' encoded by the tmRNA and targeted for degradation. The ribosome is freed to recommence translation, which seems to be the essential function of trans-translation. This is SsrA-binding protein from Syntrophotalea carbinolica (strain DSM 2380 / NBRC 103641 / GraBd1) (Pelobacter carbinolicus).